The chain runs to 130 residues: Cysteine methyltransferase (130 aa).

It carries out the reaction [trehalose-6-phosphate synthase]-L-cysteine + S-adenosyl-L-methionine = [trehalose-6-phosphate synthase]-S-methyl-L-cysteine + S-adenosyl-L-homocysteine + H(+). Functionally, S-adenosyl-L-methionine-dependent protein-cysteine S-methyltransferase with broad substrate specificity. Methylates trehalose-6-phosphate synthase (TPS), enhancing its enzymatic activity and promoting trehalose synthesis upon entry of cells into stationary phase. In Saccharomyces cerevisiae (Baker's yeast), this protein is Cysteine methyltransferase.